Here is a 163-residue protein sequence, read N- to C-terminus: Beta-carbonic anhydrase 1 (163 aa).

Positions 35, 37, 88, and 91 each coordinate Zn(2+).

Belongs to the beta-class carbonic anhydrase family. As to quaternary structure, homotetramer. The cofactor is Zn(2+).

The enzyme catalyses hydrogencarbonate + H(+) = CO2 + H2O. In terms of biological role, catalyzes the reversible hydration of carbon dioxide to form bicarbonate. The chain is Beta-carbonic anhydrase 1 from Mycobacterium bovis (strain ATCC BAA-935 / AF2122/97).